Consider the following 128-residue polypeptide: DNA-directed RNA polymerase subunit omega (128 aa).

The protein belongs to the RNA polymerase subunit omega family. In terms of assembly, the RNAP catalytic core consists of 2 alpha, 1 beta, 1 beta' and 1 omega subunit. When a sigma factor is associated with the core the holoenzyme is formed, which can initiate transcription.

The catalysed reaction is RNA(n) + a ribonucleoside 5'-triphosphate = RNA(n+1) + diphosphate. Its function is as follows. Promotes RNA polymerase assembly. Latches the N- and C-terminal regions of the beta' subunit thereby facilitating its interaction with the beta and alpha subunits. The chain is DNA-directed RNA polymerase subunit omega from Neorickettsia sennetsu (strain ATCC VR-367 / Miyayama) (Ehrlichia sennetsu).